The following is a 422-amino-acid chain: Glycine amidinotransferase, mitochondrial (422 aa).

The transit peptide at 1 to 37 directs the protein to the mitochondrion; that stretch reads MLRVRCVRGGSRGAEAVHYIGSMLRKGFVGWVQRSFQ. Residues aspartate 253 and histidine 302 contribute to the active site. Cysteine 406 functions as the Amidino-cysteine intermediate in the catalytic mechanism.

It belongs to the amidinotransferase family. Homodimer.

It is found in the mitochondrion inner membrane. The catalysed reaction is L-arginine + glycine = guanidinoacetate + L-ornithine. Its pathway is amine and polyamine biosynthesis; creatine biosynthesis; creatine from L-arginine and glycine: step 1/2. In terms of biological role, catalyzes the biosynthesis of guanidinoacetate, the immediate precursor of creatine. Creatine plays a vital role in energy metabolism in muscle tissues. May play a role in embryonic and central nervous system development. The chain is Glycine amidinotransferase, mitochondrial from Xenopus tropicalis (Western clawed frog).